A 537-amino-acid chain; its full sequence is CTP synthase (537 aa).

The segment at 1–267 is amidoligase domain; sequence MTKYIFVTGG…DQIVLDHFDV (267 aa). Ser-13 contributes to the CTP binding site. Ser-13 contributes to the UTP binding site. ATP is bound at residue 14 to 19; it reads SIGKGI. Tyr-54 is an L-glutamine binding site. Asp-71 contacts ATP. Mg(2+) is bound by residues Asp-71 and Glu-141. CTP contacts are provided by residues 148 to 150, 188 to 193, and Lys-224; these read DIE and KTKPTQ. UTP is bound by residues 188 to 193 and Lys-224; that span reads KTKPTQ. The 244-residue stretch at 292 to 535 folds into the Glutamine amidotransferase type-1 domain; sequence KIALVGKYVA…IDAANQTGKV (244 aa). Residue Gly-354 participates in L-glutamine binding. The active-site Nucleophile; for glutamine hydrolysis is Cys-381. L-glutamine-binding positions include 382 to 385, Glu-405, and Arg-463; that span reads LGMQ. Residues His-508 and Glu-510 contribute to the active site.

This sequence belongs to the CTP synthase family. Homotetramer.

It carries out the reaction UTP + L-glutamine + ATP + H2O = CTP + L-glutamate + ADP + phosphate + 2 H(+). It catalyses the reaction L-glutamine + H2O = L-glutamate + NH4(+). The catalysed reaction is UTP + NH4(+) + ATP = CTP + ADP + phosphate + 2 H(+). Its pathway is pyrimidine metabolism; CTP biosynthesis via de novo pathway; CTP from UDP: step 2/2. Its activity is regulated as follows. Allosterically activated by GTP, when glutamine is the substrate; GTP has no effect on the reaction when ammonia is the substrate. The allosteric effector GTP functions by stabilizing the protein conformation that binds the tetrahedral intermediate(s) formed during glutamine hydrolysis. Inhibited by the product CTP, via allosteric rather than competitive inhibition. In terms of biological role, catalyzes the ATP-dependent amination of UTP to CTP with either L-glutamine or ammonia as the source of nitrogen. Regulates intracellular CTP levels through interactions with the four ribonucleotide triphosphates. The sequence is that of CTP synthase from Lactiplantibacillus plantarum (strain ATCC BAA-793 / NCIMB 8826 / WCFS1) (Lactobacillus plantarum).